A 339-amino-acid polypeptide reads, in one-letter code: Methylthioribose-1-phosphate isomerase (339 aa).

Substrate is bound by residues 52-54, Arg-89, and Gln-188; that span reads RGA. Catalysis depends on Asp-229, which acts as the Proton donor. 239-240 is a binding site for substrate; that stretch reads NK.

Belongs to the eIF-2B alpha/beta/delta subunits family. MtnA subfamily.

The enzyme catalyses 5-(methylsulfanyl)-alpha-D-ribose 1-phosphate = 5-(methylsulfanyl)-D-ribulose 1-phosphate. It participates in amino-acid biosynthesis; L-methionine biosynthesis via salvage pathway; L-methionine from S-methyl-5-thio-alpha-D-ribose 1-phosphate: step 1/6. Functionally, catalyzes the interconversion of methylthioribose-1-phosphate (MTR-1-P) into methylthioribulose-1-phosphate (MTRu-1-P). This chain is Methylthioribose-1-phosphate isomerase, found in Anaeromyxobacter sp. (strain K).